A 196-amino-acid chain; its full sequence is Small ribosomal subunit protein uS4c (196 aa).

The S4 RNA-binding domain occupies 89–169; sequence MRLDNIIFRL…LPKHLTIDTV (81 aa).

This sequence belongs to the universal ribosomal protein uS4 family. As to quaternary structure, part of the 30S ribosomal subunit. Contacts protein S5. The interaction surface between S4 and S5 is involved in control of translational fidelity.

It localises to the plastid. Its subcellular location is the chloroplast. One of the primary rRNA binding proteins, it binds directly to 16S rRNA where it nucleates assembly of the body of the 30S subunit. Its function is as follows. With S5 and S12 plays an important role in translational accuracy. In Stipellula capensis (Cape rice grass), this protein is Small ribosomal subunit protein uS4c (rps4).